A 247-amino-acid polypeptide reads, in one-letter code: Adenosine 5'-phosphosulfate reductase (247 aa).

[4Fe-4S] cluster-binding residues include Cys133, Cys134, Cys216, and Cys219. The disordered stretch occupies residues 222 to 247; that stretch reads KPAPGSDPRSGRWAGASKTECGLHAS. The active-site Nucleophile; cysteine thiosulfonate intermediate is the Cys242.

The protein belongs to the PAPS reductase family. CysH subfamily. Requires [4Fe-4S] cluster as cofactor.

The protein resides in the cytoplasm. The enzyme catalyses [thioredoxin]-disulfide + sulfite + AMP + 2 H(+) = adenosine 5'-phosphosulfate + [thioredoxin]-dithiol. It participates in sulfur metabolism; hydrogen sulfide biosynthesis; sulfite from sulfate. Its function is as follows. Catalyzes the formation of sulfite from adenosine 5'-phosphosulfate (APS) using thioredoxin as an electron donor. In Rhodococcus erythropolis (strain PR4 / NBRC 100887), this protein is Adenosine 5'-phosphosulfate reductase.